We begin with the raw amino-acid sequence, 193 residues long: 3-isopropylmalate dehydratase small subunit (193 aa).

It belongs to the LeuD family. LeuD type 1 subfamily. Heterodimer of LeuC and LeuD.

The enzyme catalyses (2R,3S)-3-isopropylmalate = (2S)-2-isopropylmalate. It participates in amino-acid biosynthesis; L-leucine biosynthesis; L-leucine from 3-methyl-2-oxobutanoate: step 2/4. Catalyzes the isomerization between 2-isopropylmalate and 3-isopropylmalate, via the formation of 2-isopropylmaleate. In Bacillus cereus (strain B4264), this protein is 3-isopropylmalate dehydratase small subunit.